The chain runs to 447 residues: ATP-dependent protease ATPase subunit HslU (447 aa).

Residues Ile-17, 59 to 64, Asp-256, Glu-321, and Arg-393 each bind ATP; that span reads GVGKTE.

This sequence belongs to the ClpX chaperone family. HslU subfamily. A double ring-shaped homohexamer of HslV is capped on each side by a ring-shaped HslU homohexamer. The assembly of the HslU/HslV complex is dependent on binding of ATP.

Its subcellular location is the cytoplasm. Functionally, ATPase subunit of a proteasome-like degradation complex; this subunit has chaperone activity. The binding of ATP and its subsequent hydrolysis by HslU are essential for unfolding of protein substrates subsequently hydrolyzed by HslV. HslU recognizes the N-terminal part of its protein substrates and unfolds these before they are guided to HslV for hydrolysis. This chain is ATP-dependent protease ATPase subunit HslU, found in Pseudomonas entomophila (strain L48).